Reading from the N-terminus, the 195-residue chain is Thymidine kinase (195 aa).

Residues 15 to 22 (GSMFSGKT) and 91 to 94 (DEAN) each bind ATP. Residue Glu92 is the Proton acceptor of the active site. 4 residues coordinate Zn(2+): Cys148, Cys151, Cys186, and Cys189.

Belongs to the thymidine kinase family. Homotetramer.

The protein localises to the cytoplasm. It catalyses the reaction thymidine + ATP = dTMP + ADP + H(+). This is Thymidine kinase from Halobacterium salinarum (strain ATCC 29341 / DSM 671 / R1).